A 289-amino-acid chain; its full sequence is Rhodopsin (289 aa).

Over 1–7 (YLVSPAG) the chain is Extracellular. Residues 8–32 (YAALGAYMFLLILVGFPVNFLTLYV) traverse the membrane as a helical segment. Residues 33–44 (TLEHKKLRTPLN) are Cytoplasmic-facing. Residues 45-67 (YILLNLAVADLFMVLGGFTTTMY) traverse the membrane as a helical segment. Over 68 to 81 (TSMHGYFVLGRLGC) the chain is Extracellular. A disulfide bridge links cysteine 81 with cysteine 158. The helical transmembrane segment at 82–104 (NLEGFFVTLGGEIALWSLVVLAI) threads the bilayer. The short motif at 105–107 (ERW) is the 'Ionic lock' involved in activated form stabilization element. The Cytoplasmic portion of the chain corresponds to 105–123 (ERWIGVFKSIRNFRFTEDH). The chain crosses the membrane as a helical span at residues 124-144 (AIMGLGFSWVMAATCAVPPLV). Over 145-173 (GWLRYIPEGMQCSCGVDYYTRAEGFNNES) the chain is Extracellular. N-linked (GlcNAc...) asparagine glycosylation occurs at asparagine 171. Residues 174–195 (FVIYMFIVHFLIPLIVIFFCYG) traverse the membrane as a helical segment. At 196–223 (RLLCAVKEAAAAQQESETTQRAEKEVSR) the chain is on the cytoplasmic side. The chain crosses the membrane as a helical span at residues 224–245 (MVVIMVIGYLVCWLPYASVAWW). Residues 246–257 (IFCNQGSEFGPI) are Extracellular-facing. A helical transmembrane segment spans residues 258-279 (FMTLPAFFAKSPAIYNPLIYIC). Position 267 is an N6-(retinylidene)lysine (lysine 267). Residues 280–289 (MNKQFPHCMI) are Cytoplasmic-facing.

This sequence belongs to the G-protein coupled receptor 1 family. Opsin subfamily. In terms of processing, phosphorylated on some or all of the serine and threonine residues present in the C-terminal region. Post-translationally, contains one covalently linked retinal chromophore.

It localises to the membrane. The protein localises to the cell projection. It is found in the cilium. Its subcellular location is the photoreceptor outer segment. In terms of biological role, photoreceptor required for image-forming vision at low light intensity. While most salt water fish species use retinal as chromophore, most freshwater fish use 3-dehydroretinal, or a mixture of retinal and 3-dehydroretinal. Light-induced isomerization of 11-cis to all-trans retinal triggers a conformational change that activates signaling via G-proteins. Subsequent receptor phosphorylation mediates displacement of the bound G-protein alpha subunit by arrestin and terminates signaling. This chain is Rhodopsin (rho), found in Leocottus kesslerii (Kessler's sculpin).